A 499-amino-acid polypeptide reads, in one-letter code: Putative DBH-like monooxygenase protein 2 (499 aa).

Positions 1 to 16 (MAHDLLFRLFPLLALG) are cleaved as a signal peptide. A DOMON domain is found at 40 to 156 (NVIFLRWDFD…NTVRVLAAYG (117 aa)). Tyr-209 is a catalytic residue. 2 disulfide bridges follow: Cys-211–Cys-261 and Cys-248–Cys-271. A glycan (N-linked (GlcNAc...) asparagine) is linked at Asn-236. Residues His-241 and His-242 each contribute to the Cu cation site. A glycan (N-linked (GlcNAc...) asparagine) is linked at Asn-250. Residues His-308, His-389, and His-391 each coordinate Cu cation. 2 cysteine pairs are disulfide-bonded: Cys-365–Cys-480 and Cys-443–Cys-465. The active site involves His-389. An N-linked (GlcNAc...) asparagine glycan is attached at Asn-404. Met-464 serves as a coordination point for Cu cation. N-linked (GlcNAc...) asparagine glycosylation occurs at Asn-476.

This sequence belongs to the copper type II ascorbate-dependent monooxygenase family. Cu(2+) is required as a cofactor.

The sequence is that of Putative DBH-like monooxygenase protein 2 (MOXD2P) from Homo sapiens (Human).